Reading from the N-terminus, the 509-residue chain is L-arabinose isomerase (509 aa).

The Mn(2+) site is built by E313, E340, H357, and H456.

This sequence belongs to the arabinose isomerase family. Requires Mn(2+) as cofactor.

It carries out the reaction beta-L-arabinopyranose = L-ribulose. It functions in the pathway carbohydrate degradation; L-arabinose degradation via L-ribulose; D-xylulose 5-phosphate from L-arabinose (bacterial route): step 1/3. Its function is as follows. Catalyzes the conversion of L-arabinose to L-ribulose. This chain is L-arabinose isomerase, found in Phocaeicola vulgatus (strain ATCC 8482 / DSM 1447 / JCM 5826 / CCUG 4940 / NBRC 14291 / NCTC 11154) (Bacteroides vulgatus).